Reading from the N-terminus, the 114-residue chain is Iron-sulfur cluster insertion protein ErpA (114 aa).

Iron-sulfur cluster-binding residues include C42, C106, and C108.

It belongs to the HesB/IscA family. Homodimer. Iron-sulfur cluster is required as a cofactor.

Functionally, required for insertion of 4Fe-4S clusters for at least IspG. This chain is Iron-sulfur cluster insertion protein ErpA, found in Citrobacter koseri (strain ATCC BAA-895 / CDC 4225-83 / SGSC4696).